The sequence spans 583 residues: RuBisCO large subunit-binding protein subunit alpha, chloroplastic (583 aa).

Positions 1 to 14 (MATANALSSPSVLC) are enriched in polar residues. Positions 1–35 (MATANALSSPSVLCSSRQGKLSGGSQQKGQRVSYR) are disordered. Residues 1 to 45 (MATANALSSPSVLCSSRQGKLSGGSQQKGQRVSYRKANRRFSLRA) constitute a chloroplast transit peptide. The segment covering 15-31 (SSRQGKLSGGSQQKGQR) has biased composition (low complexity). The residue at position 89 (serine 89) is a Phosphoserine.

This sequence belongs to the chaperonin (HSP60) family. As to quaternary structure, oligomer of probably six alpha and six beta subunits.

The protein resides in the plastid. It is found in the chloroplast. In terms of biological role, this protein binds RuBisCO small and large subunits and is implicated in the assembly of the enzyme oligomer. The sequence is that of RuBisCO large subunit-binding protein subunit alpha, chloroplastic from Brassica napus (Rape).